The chain runs to 134 residues: Large ribosomal subunit protein bL20 (134 aa).

This sequence belongs to the bacterial ribosomal protein bL20 family.

Binds directly to 23S ribosomal RNA and is necessary for the in vitro assembly process of the 50S ribosomal subunit. It is not involved in the protein synthesizing functions of that subunit. In Rhizobium meliloti (strain 1021) (Ensifer meliloti), this protein is Large ribosomal subunit protein bL20.